A 230-amino-acid polypeptide reads, in one-letter code: Large ribosomal subunit protein uL1 (230 aa).

This sequence belongs to the universal ribosomal protein uL1 family. As to quaternary structure, part of the 50S ribosomal subunit.

Functionally, binds directly to 23S rRNA. The L1 stalk is quite mobile in the ribosome, and is involved in E site tRNA release. Its function is as follows. Protein L1 is also a translational repressor protein, it controls the translation of the L11 operon by binding to its mRNA. This Leptospira borgpetersenii serovar Hardjo-bovis (strain JB197) protein is Large ribosomal subunit protein uL1.